The chain runs to 197 residues: Adenylate kinase (197 aa).

16-21 (GAGKGT) contributes to the ATP binding site. An NMP region spans residues 36–65 (STGDILRDHVARGTELGQQVKPILDAGHLV). AMP-binding positions include T37, R42, 63-65 (HLV), 90-93 (GFPR), and Q97. Residues 131–147 (ERGNQAQARGEAVRSDD) form an LID region. R132 contributes to the ATP binding site. Residues R144 and R155 each contribute to the AMP site. ATP is bound at residue G183.

Belongs to the adenylate kinase family. Monomer.

The protein localises to the cytoplasm. It carries out the reaction AMP + ATP = 2 ADP. Its pathway is purine metabolism; AMP biosynthesis via salvage pathway; AMP from ADP: step 1/1. Its function is as follows. Catalyzes the reversible transfer of the terminal phosphate group between ATP and AMP. Plays an important role in cellular energy homeostasis and in adenine nucleotide metabolism. In Deinococcus deserti (strain DSM 17065 / CIP 109153 / LMG 22923 / VCD115), this protein is Adenylate kinase.